A 229-amino-acid chain; its full sequence is Geodin cluster transcription factor (229 aa).

Residues 12–39 (CHACAASKVRCSKEKPTCSRCSKRGTTC) constitute a DNA-binding region (zn(2)-C6 fungal-type). Disordered stretches follow at residues 50 to 100 (KQLN…PGTT) and 141 to 169 (TANSEPLDAEGGITSSHNTSSNSPARPPT). Polar residues-rich tracts occupy residues 51 to 71 (QLNNRSTAKESSNTTRTSLAT) and 153 to 164 (ITSSHNTSSNSP).

It is found in the nucleus. Transcription factor that regulates the expression of the gene cluster that mediates the biosynthesis of geodin, an intermediate in the biosynthesis of other natural products. In Aspergillus terreus (strain NIH 2624 / FGSC A1156), this protein is Geodin cluster transcription factor.